We begin with the raw amino-acid sequence, 521 residues long: MREIVTLQFGERSNYLGTHFWNTQESYFTYPPEAESPVNHDILFRPGIAPDGSDTFTPRALIYDLKGAFGSMRKINALYEPEDDRSILDQPGVWPSKPIVQRTQPIPPSTYQEHLDNGLDPPALNISSVRYWSDYSRVFYHPKSIAQLSEFDVNDTLMPFEKWEVGKGLFEKLEREVDLVDRDLRPFVEECDGIQGLQIFTGVDDAWGGWASGWIERLRDEYGKMSIWTWGLGDQGANAAVGRERRLQQMVNASQSLQTLGEQSSVYIPISNSPTKTPSYLSLDATSLWHVGALQAIGLESMTISSRLRTSVGGRGNLQDLEDTINSTGKRRIGKFEMSIADPEVLSENYSKEMAQAEKTGSMTSRRTSEDDEELSSFDIDVFTRDYRAVSRSGKKEHVFGRAEVSRGDWNLTDDNEARDPHNRFNQGPTLQRYTAPILFPLLDSYPTSIFDVGSGLGTKLAVHAGLTTSTAVAGQIRAVEQIVKRLVGIEEREALCNGLQVLAEEYDEGWDSGTDSDDDG.

The protein belongs to the misato family.

It is found in the mitochondrion. In terms of biological role, involved in the partitioning of the mitochondrial organelle and mitochondrial DNA (mtDNA) inheritance. This chain is Protein DML1 (DML1), found in Phaeosphaeria nodorum (strain SN15 / ATCC MYA-4574 / FGSC 10173) (Glume blotch fungus).